The primary structure comprises 293 residues: Nitrogenase iron protein (293 aa).

10 to 17 (GKGGIGKS) contacts ATP. Cys-98 is a binding site for [4Fe-4S] cluster. Residue Arg-101 is modified to ADP-ribosylarginine; by dinitrogenase reductase ADP-ribosyltransferase. Residue Cys-133 participates in [4Fe-4S] cluster binding.

Belongs to the NifH/BchL/ChlL family. As to quaternary structure, homodimer. [4Fe-4S] cluster is required as a cofactor. Post-translationally, the reversible ADP-ribosylation of Arg-101 inactivates the nitrogenase reductase and regulates nitrogenase activity.

It carries out the reaction N2 + 8 reduced [2Fe-2S]-[ferredoxin] + 16 ATP + 16 H2O = H2 + 8 oxidized [2Fe-2S]-[ferredoxin] + 2 NH4(+) + 16 ADP + 16 phosphate + 6 H(+). Functionally, the key enzymatic reactions in nitrogen fixation are catalyzed by the nitrogenase complex, which has 2 components: the iron protein and the molybdenum-iron protein. This chain is Nitrogenase iron protein, found in Pectobacterium atrosepticum (strain SCRI 1043 / ATCC BAA-672) (Erwinia carotovora subsp. atroseptica).